The primary structure comprises 263 residues: Phosphonoacetaldehyde hydrolase (263 aa).

Residue D10 is the Nucleophile of the active site. Mg(2+)-binding residues include D10 and A12. The active-site Schiff-base intermediate with substrate is the K51. D184 serves as a coordination point for Mg(2+).

The protein belongs to the HAD-like hydrolase superfamily. PhnX family. As to quaternary structure, homodimer. Requires Mg(2+) as cofactor.

The catalysed reaction is phosphonoacetaldehyde + H2O = acetaldehyde + phosphate + H(+). Functionally, involved in phosphonate degradation. In Bacteroides fragilis (strain ATCC 25285 / DSM 2151 / CCUG 4856 / JCM 11019 / LMG 10263 / NCTC 9343 / Onslow / VPI 2553 / EN-2), this protein is Phosphonoacetaldehyde hydrolase.